A 415-amino-acid chain; its full sequence is Probable glucuronosyltransferase Os03g0287800 (415 aa).

Over 1–25 the chain is Cytoplasmic; sequence MGSSTDHGGAGGRGKKGSGSQLWKK. The chain crosses the membrane as a helical; Signal-anchor for type II membrane protein span at residues 26-43; that stretch reads ALLHSSLCFVMGFFTGFA. Residues 44–415 lie on the Lumenal side of the membrane; sequence PSSVSDWTSA…GGRFLSGDFC (372 aa). N78, N165, N257, and N287 each carry an N-linked (GlcNAc...) asparagine glycan.

The protein belongs to the glycosyltransferase 43 family.

It is found in the golgi apparatus membrane. Functionally, involved in the synthesis of glucuronoxylan hemicellulose in secondary cell walls. This chain is Probable glucuronosyltransferase Os03g0287800, found in Oryza sativa subsp. japonica (Rice).